The primary structure comprises 514 residues: MALLNRLAKTFSPYYGLNKVEQKLLIKIDWFILSYCCVSYFINYLDRSSINNAYLSGMQEDLKMHGNELQDINVVFTCGYIIGQLPGSYALQRVPARLWFSVMNILWGLMTIFSFAVHSVRALMILRFFMAVAEASTFAGTHYILGAWYKESELCKRAGIFSASGLVGTMFAGYLQTAVHSSLNGKGGLSGWRWLFIIDGILTIPLSLYGLFLFPDVPETTKAPYFTEQEKELSFKRLPARPKKKPLTLKAIKDIVRSWRIYGLCILWIFSGETQAIAVNVLMGQWMKWSNKFSVAQINNYPTVITAVGVVSTLGASVISDKLAGNPRWPFGLFLCVITTVSATILLAWNVPDGAKFFAYFASGCTYAGQAVWFSWANDICRDNDQERGVVVFLMNMCQNIWHIWWAPIMYPNTDTPRFIKGLIGLLVVGGIVFVSSCIVSYMQIRDKRIKRSIQDAKDFDDVFTEHESLELKKIGKNDEESLNTTNAVKEISSPGLVITRQRISMPKETNAQD.

The next 12 helical transmembrane spans lie at 24 to 44 (LLIKIDWFILSYCCVSYFINY), 72 to 92 (INVVFTCGYIIGQLPGSYALQ), 98 to 118 (LWFSVMNILWGLMTIFSFAVH), 128 to 148 (FFMAVAEASTFAGTHYILGAW), 159 to 179 (GIFSASGLVGTMFAGYLQTAV), 194 to 214 (WLFIIDGILTIPLSLYGLFLF), 263 to 283 (GLCILWIFSGETQAIAVNVLM), 300 to 320 (NYPTVITAVGVVSTLGASVIS), 329 to 349 (WPFGLFLCVITTVSATILLAW), 357 to 377 (FFAYFASGCTYAGQAVWFSWA), 390 to 410 (VVVFLMNMCQNIWHIWWAPIM), and 423 to 443 (LIGLLVVGGIVFVSSCIVSYM).

The protein belongs to the major facilitator superfamily. Allantoate permease family.

The protein resides in the cell membrane. Its function is as follows. Transports pantothenate into the cell. The chain is Pantothenate transporter liz1 (liz1) from Schizosaccharomyces pombe (strain 972 / ATCC 24843) (Fission yeast).